A 257-amino-acid polypeptide reads, in one-letter code: Ribosome-associated protein quality control protein P2 (257 aa).

Positions 1–74 are N-terminal domain; the sequence is MSDIYQHFRK…RAERKRAILF (74 aa). Residues 87–166 form a central region region; the sequence is LQAFNVRYAD…EKIDLSDLNI (80 aa). The 71-residue stretch at 181–251 folds into the S4 RNA-binding domain; the sequence is LRLDAVCASM…GKTKKDKWRV (71 aa).

In terms of assembly, in the presence of chloramphenicol (a translation elongation inhibitor), but not erythromycin or lincomycin, associates with 50S ribosomal subunits with or without a tRNA in the P-site. The S4 domain binds in a similar position to RqcP.

It is found in the cytoplasm. In terms of biological role, part of the ribosome quality control system (RQC), a ribosome-associated complex that mediates the extraction of incompletely synthesized nascent chains from stalled ribosomes and their subsequent degradation. RqcH recruits Ala-charged tRNA, and with RqcP directs the elongation of stalled nascent chains on 50S ribosomal subunits, leading to non-templated C-terminal alanine extensions (Ala tail). The Ala tail promotes nascent chain degradation. RqcP2 (YlmH) overexpression can compensate for RqcP's role in Ala tailing during RQC, restoring Ala tail addition to peptides in stalled ribosomes. Overexpression complements a double ssrA-rqcP double deletion, but not an ssrA-rqcH double deletion. Its function is as follows. The majority of tagged protein is associated with tRNA-less 50S subunits, suggesting it might also play a role in late stage 50S subunit biogenesis. The chain is Ribosome-associated protein quality control protein P2 from Bacillus subtilis (strain 168).